We begin with the raw amino-acid sequence, 327 residues long: 2-methoxy-6-polyprenyl-1,4-benzoquinol methylase, mitochondrial (327 aa).

The N-terminal 49 residues, 1–49 (MAAPRSCALWSYCGRGWSWAMRGCQLLGLRSSWPGAPLSARLLPQEKRA), are a transit peptide targeting the mitochondrion. S-adenosyl-L-methionine-binding positions include Thr117, Asp171, and 199–200 (DA).

This sequence belongs to the class I-like SAM-binding methyltransferase superfamily. MenG/UbiE family. As to quaternary structure, component of a multi-subunit COQ enzyme complex, composed of at least COQ3, COQ4, COQ5, COQ6, COQ7 and COQ9. Interacts with PYURF; the interaction is direct, stabilizes COQ5 protein and associates PYURF with COQ enzyme complex.

The protein localises to the mitochondrion inner membrane. The catalysed reaction is 2-methoxy-6-(all-trans-decaprenyl)benzene-1,4-diol + S-adenosyl-L-methionine = 5-methoxy-2-methyl-3-(all-trans-decaprenyl)benzene-1,4-diol + S-adenosyl-L-homocysteine + H(+). It functions in the pathway cofactor biosynthesis; ubiquinone biosynthesis. Methyltransferase required for the conversion of 2-decaprenyl-6-methoxy-1,4-benzoquinol (DDMQH2) to 2-decaprenyl-3-methyl-6-methoxy-1,4-benzoquinol (DMQH2). The polypeptide is 2-methoxy-6-polyprenyl-1,4-benzoquinol methylase, mitochondrial (Pongo abelii (Sumatran orangutan)).